A 494-amino-acid polypeptide reads, in one-letter code: Maintenance of mitochondrial morphology protein 1 (494 aa).

The Lumenal segment spans residues 1–22; the sequence is MSSQPGDPATLPAQSSLSFTQG. Residues 23–43 traverse the membrane as a helical segment; sequence FLLGQLSVVLVLAAFIKFFIF. The Cytoplasmic segment spans residues 44 to 494; it reads GEAPPPPSRG…GSLPEAVTPG (451 aa). 4 disordered regions span residues 50–98, 274–330, 398–426, and 449–494; these read PSRG…SSST, PPLD…KSNV, VRTG…ARHE, and VASR…VTPG. Positions 54-64 are enriched in basic residues; it reads LSHRSATHRRS. 2 stretches are compositionally biased toward polar residues: residues 65 to 76 and 85 to 98; these read NSIYSNSPQEAG and STSN…SSST. Residues 130–387 enclose the SMP-LTD domain; the sequence is QPESLDWFNV…EPRVQVVGLP (258 aa). The segment covering 274 to 286 has biased composition (pro residues); that stretch reads PPLDTPSHSPSPP. 2 stretches are compositionally biased toward polar residues: residues 406-416 and 466-477; these read TASNGPRSTVS and RSMTRQESSGDL.

This sequence belongs to the MMM1 family. Homodimer. Component of the ER-mitochondria encounter structure (ERMES) or MDM complex, composed of mmm1, mdm10, mdm12 and mdm34. A mmm1 homodimer associates with one molecule of mdm12 on each side in a pairwise head-to-tail manner, and the SMP-LTD domains of mmm1 and mdm12 generate a continuous hydrophobic tunnel for phospholipid trafficking.

The protein resides in the endoplasmic reticulum membrane. Functionally, component of the ERMES/MDM complex, which serves as a molecular tether to connect the endoplasmic reticulum (ER) and mitochondria. Components of this complex are involved in the control of mitochondrial shape and protein biogenesis, and function in nonvesicular lipid trafficking between the ER and mitochondria. The mdm12-mmm1 subcomplex functions in the major beta-barrel assembly pathway that is responsible for biogenesis of all outer membrane beta-barrel proteins, and acts in a late step after the SAM complex. The mdm10-mdm12-mmm1 subcomplex further acts in the TOM40-specific pathway after the action of the mdm12-mmm1 complex. Essential for establishing and maintaining the structure of mitochondria and maintenance of mtDNA nucleoids. The polypeptide is Maintenance of mitochondrial morphology protein 1 (Aspergillus clavatus (strain ATCC 1007 / CBS 513.65 / DSM 816 / NCTC 3887 / NRRL 1 / QM 1276 / 107)).